Here is a 475-residue protein sequence, read N- to C-terminus: Enolase (475 aa).

Residue glutamine 179 participates in (2R)-2-phosphoglycerate binding. Glutamate 221 functions as the Proton donor in the catalytic mechanism. Mg(2+)-binding residues include aspartate 258, glutamate 312, and aspartate 339. Residues lysine 364, arginine 393, serine 394, and lysine 415 each contribute to the (2R)-2-phosphoglycerate site. The active-site Proton acceptor is lysine 364. A disordered region spans residues serine 454 to lysine 475. Positions serine 463–lysine 475 are enriched in basic residues.

This sequence belongs to the enolase family. The cofactor is Mg(2+).

Its subcellular location is the cell membrane. It is found in the cytoplasm. It localises to the secreted. The protein resides in the cell surface. The enzyme catalyses (2R)-2-phosphoglycerate = phosphoenolpyruvate + H2O. It functions in the pathway carbohydrate degradation; glycolysis; pyruvate from D-glyceraldehyde 3-phosphate: step 4/5. Functionally, catalyzes the reversible conversion of 2-phosphoglycerate (2-PG) into phosphoenolpyruvate (PEP). It is essential for the degradation of carbohydrates via glycolysis. Its function is as follows. 'Moonlights' as a plasminogen receptor. Binds host (chicken) plasminogen; enolase antiserum inhibits M.gallisepticum adherence to chicken embryo fibroblasts. The polypeptide is Enolase (Mycoplasmoides gallisepticum (strain R(low / passage 15 / clone 2)) (Mycoplasma gallisepticum)).